Here is a 241-residue protein sequence, read N- to C-terminus: Anti-Pycsar protein Apyc1 (241 aa).

Positions 17-215 (DNNNALLEQD…SVQKKTWLMH (199 aa)) are beta-lactamase-like. Zn(2+)-binding residues include His59, His61, Asp63, His64, His142, Asp162, and His215.

It belongs to the nuclease anti-Pycsar protein Apyc1 family. Homodimer. Requires Zn(2+) as cofactor.

The enzyme catalyses 3',5'-cyclic CMP + H2O = CMP + H(+). It catalyses the reaction 3',5'-cyclic UMP + H2O = UMP + H(+). Counteracts the endogenous Pycsar antiviral defense system. Phosphodiesterase that enables metal-dependent hydrolysis of host cyclic nucleotide Pycsar defense signals such as cCMP and cUMP. This is Anti-Pycsar protein Apyc1 from Paenibacillus harenae.